The chain runs to 351 residues: Peptide chain release factor 1 (351 aa).

Glutamine 229 bears the N5-methylglutamine mark.

It belongs to the prokaryotic/mitochondrial release factor family. In terms of processing, methylated by PrmC. Methylation increases the termination efficiency of RF1.

Its subcellular location is the cytoplasm. Its function is as follows. Peptide chain release factor 1 directs the termination of translation in response to the peptide chain termination codons UAG and UAA. This is Peptide chain release factor 1 from Dinoroseobacter shibae (strain DSM 16493 / NCIMB 14021 / DFL 12).